We begin with the raw amino-acid sequence, 452 residues long: Trigger factor (452 aa).

A PPIase FKBP-type domain is found at 171-256 (GDRVTISFKG…ATKVEAPQDT (86 aa)).

It belongs to the FKBP-type PPIase family. Tig subfamily.

The protein localises to the cytoplasm. The enzyme catalyses [protein]-peptidylproline (omega=180) = [protein]-peptidylproline (omega=0). Functionally, involved in protein export. Acts as a chaperone by maintaining the newly synthesized protein in an open conformation. Functions as a peptidyl-prolyl cis-trans isomerase. This chain is Trigger factor, found in Rhodopseudomonas palustris (strain HaA2).